The sequence spans 381 residues: Formate dehydrogenase, mitochondrial (381 aa).

The transit peptide at 1–25 (MAMSRVASTAARAITSPSSLVFTRE) directs the protein to the mitochondrion. The substrate site is built by Ile-125 and Asn-149. NAD(+)-binding positions include Thr-150, 204–205 (RI), Asp-224, 259–263 (PLTEK), Asn-285, Asp-311, and 335–338 (HISG).

It belongs to the D-isomer specific 2-hydroxyacid dehydrogenase family. FDH subfamily. Homodimer. As to expression, found at high levels in developing tubers, at intermediate level in stems, veins, stolons, and stamens, and at low level in leaves and roots.

It localises to the mitochondrion. It catalyses the reaction formate + NAD(+) = CO2 + NADH. Catalyzes the NAD(+)-dependent oxidation of formate to carbon dioxide. Involved in the cell stress response. Involved in formate-dependent oxygen uptake coupled to ATP synthesis. This chain is Formate dehydrogenase, mitochondrial, found in Solanum tuberosum (Potato).